A 376-amino-acid polypeptide reads, in one-letter code: Queuine tRNA-ribosyltransferase (376 aa).

Catalysis depends on aspartate 93, which acts as the Proton acceptor. Substrate is bound by residues 93 to 97 (DSGGF), aspartate 147, glutamine 190, and glycine 217. An RNA binding region spans residues 248-254 (GVGKPDD). The active-site Nucleophile is aspartate 267. Cysteine 305, cysteine 307, cysteine 310, and histidine 336 together coordinate Zn(2+).

It belongs to the queuine tRNA-ribosyltransferase family. In terms of assembly, homodimer. Within each dimer, one monomer is responsible for RNA recognition and catalysis, while the other monomer binds to the replacement base PreQ1. Zn(2+) is required as a cofactor.

It carries out the reaction 7-aminomethyl-7-carbaguanine + guanosine(34) in tRNA = 7-aminomethyl-7-carbaguanosine(34) in tRNA + guanine. The protein operates within tRNA modification; tRNA-queuosine biosynthesis. Functionally, catalyzes the base-exchange of a guanine (G) residue with the queuine precursor 7-aminomethyl-7-deazaguanine (PreQ1) at position 34 (anticodon wobble position) in tRNAs with GU(N) anticodons (tRNA-Asp, -Asn, -His and -Tyr). Catalysis occurs through a double-displacement mechanism. The nucleophile active site attacks the C1' of nucleotide 34 to detach the guanine base from the RNA, forming a covalent enzyme-RNA intermediate. The proton acceptor active site deprotonates the incoming PreQ1, allowing a nucleophilic attack on the C1' of the ribose to form the product. After dissociation, two additional enzymatic reactions on the tRNA convert PreQ1 to queuine (Q), resulting in the hypermodified nucleoside queuosine (7-(((4,5-cis-dihydroxy-2-cyclopenten-1-yl)amino)methyl)-7-deazaguanosine). The chain is Queuine tRNA-ribosyltransferase from Ruegeria pomeroyi (strain ATCC 700808 / DSM 15171 / DSS-3) (Silicibacter pomeroyi).